The sequence spans 65 residues: Large ribosomal subunit protein bL35 (65 aa).

The protein belongs to the bacterial ribosomal protein bL35 family.

This chain is Large ribosomal subunit protein bL35, found in Rubrobacter xylanophilus (strain DSM 9941 / JCM 11954 / NBRC 16129 / PRD-1).